The following is a 216-amino-acid chain: 3-isopropylmalate dehydratase small subunit (216 aa).

The protein belongs to the LeuD family. LeuD type 1 subfamily. In terms of assembly, heterodimer of LeuC and LeuD.

The catalysed reaction is (2R,3S)-3-isopropylmalate = (2S)-2-isopropylmalate. It functions in the pathway amino-acid biosynthesis; L-leucine biosynthesis; L-leucine from 3-methyl-2-oxobutanoate: step 2/4. Catalyzes the isomerization between 2-isopropylmalate and 3-isopropylmalate, via the formation of 2-isopropylmaleate. This chain is 3-isopropylmalate dehydratase small subunit, found in Psychrobacter arcticus (strain DSM 17307 / VKM B-2377 / 273-4).